Reading from the N-terminus, the 429-residue chain is Phosphoribosylamine--glycine ligase (429 aa).

The 208-residue stretch at 109–316 folds into the ATP-grasp domain; the sequence is KDFLARHNIP…LVELCQAAIA (208 aa). 135-196 contributes to the ATP binding site; that stretch reads VREKGAPIVV…EEFLDGEEAS (62 aa). Mg(2+) contacts are provided by Glu286 and Asn288.

Belongs to the GARS family. It depends on Mg(2+) as a cofactor. The cofactor is Mn(2+).

The enzyme catalyses 5-phospho-beta-D-ribosylamine + glycine + ATP = N(1)-(5-phospho-beta-D-ribosyl)glycinamide + ADP + phosphate + H(+). The protein operates within purine metabolism; IMP biosynthesis via de novo pathway; N(1)-(5-phospho-D-ribosyl)glycinamide from 5-phospho-alpha-D-ribose 1-diphosphate: step 2/2. In Vibrio cholerae serotype O1 (strain ATCC 39315 / El Tor Inaba N16961), this protein is Phosphoribosylamine--glycine ligase.